The sequence spans 278 residues: Complement component 1 Q subcomponent-binding protein, mitochondrial (278 aa).

The transit peptide at methionine 1–alanine 70 directs the protein to the mitochondrion. Residues threonine 73–glutamate 90 form a C1q binding region. An N6-acetyllysine mark is found at lysine 88 and lysine 91. Residues asparagine 133–threonine 162 form a disordered region. Residues phenylalanine 165–alanine 209 are interaction with MAVS. Tyrosine 184 bears the Phosphotyrosine mark. Serine 197 and serine 201 each carry phosphoserine. Threonine 210 is subject to Phosphothreonine.

It belongs to the MAM33 family. In terms of assembly, homotrimer; three monomers form a donut-shaped structure with an unusually asymmetric charge distribution on the surface. Interacts with CDK13, HRK, VTN, NFYB, ADRA1B, FOXC1, DDX21, DDX50, NCL, SRSF1 and SRSF9. Interacts with CD93; the association may represent a cell surface C1q receptor. Interacts with KRT1; the association represents a cell surface kininogen receptor. Interacts with CD209; the interaction is indicative for a C1q:C1QBP:CD209 signaling complex. Interacts with FBL and RRP1; the respective interactions with C1QBP are competitive. Probably associates with the mitoribosome. Interacts with MAVS; the interaction occurs upon viral transfection. Interacts with PPIF. Interacts with U2AF1L4. Interacts with PLEKHN1. Interacts with VGF-derived peptide TLQP-21. Interacts with MRE11 and RAD50; forming the MRC (MRE11-RAD50-C1QBP) complex that inhibits the activity of MRE11. Ubiquitous.

It is found in the mitochondrion matrix. It localises to the nucleus. Its subcellular location is the cell membrane. The protein localises to the secreted. The protein resides in the cytoplasm. It is found in the nucleolus. Is believed to be a multifunctional and multicompartmental protein involved in inflammation and infection processes, ribosome biogenesis, protein synthesis in mitochondria, regulation of apoptosis, transcriptional regulation and pre-mRNA splicing. At the cell surface is thought to act as an endothelial receptor for plasma proteins of the complement and kallikrein-kinin cascades. Putative receptor for C1q; specifically binds to the globular 'heads' of C1q thus inhibiting C1; may perform the receptor function through a complex with C1qR/CD93. In complex with cytokeratin-1/KRT1 is a high affinity receptor for kininogen-1/HMWK. Can also bind other plasma proteins, such as coagulation factor XII leading to its autoactivation. May function to bind initially fluid kininogen-1 to the cell membrane. The secreted form may enhance both extrinsic and intrinsic coagulation pathways. It is postulated that the cell surface form requires docking with transmembrane proteins for downstream signaling which might be specific for a cell-type or response. By acting as C1q receptor is involved in chemotaxis of immature dendritic cells and neutrophils and is proposed to signal through CD209/DC-SIGN on immature dendritic cells, through integrin alpha-4/beta-1 during trophoblast invasion of the decidua, and through integrin beta-1 during endothelial cell adhesion and spreading. Signaling involved in inhibition of innate immune response is implicating the PI3K-AKT/PKB pathway. Required for protein synthesis in mitochondria. In mitochondrial translation may be involved in formation of functional 55S mitoribosomes; the function seems to involve its RNA-binding activity. Acts as a RNA modification reader, which specifically recognizes and binds mitochondrial RNAs modified by C5-methylcytosine (m5C) in response to stress, and promotes recruitment of the mitochondrial degradosome complex, leading to their degradation. May be involved in the nucleolar ribosome maturation process; the function may involve the exchange of FBL for RRP1 in the association with pre-ribosome particles. Involved in regulation of RNA splicing by inhibiting the RNA-binding capacity of SRSF1 and its phosphorylation. Is required for the nuclear translocation of splicing factor U2AF1L4. Involved in regulation of CDKN2A- and HRK-mediated apoptosis. May be involved in regulation of FOXC1 transcriptional activity and NFY/CCAAT-binding factor complex-mediated transcription. May play a role in antibacterial defense. Acts as a regulator of DNA repair via homologous recombination by inhibiting the activity of MRE11: interacts with unphosphorylated MRE11 and RAD50 in absence of DNA damage, preventing formation and activity of the MRN complex. Following DNA damage, dissociates from phosphorylated MRE11, allowing formation of the MRN complex. This Mus musculus (Mouse) protein is Complement component 1 Q subcomponent-binding protein, mitochondrial (C1qbp).